Reading from the N-terminus, the 207-residue chain is Sodium/potassium-transporting ATPase subunit beta-1-interacting protein 1 (207 aa).

Transmembrane regions (helical) follow at residues 2 to 22, 35 to 55, and 62 to 82; these read GRCD…VAAL, APIL…FGTV, and LILY…IICF. N-linked (GlcNAc...) asparagine glycosylation occurs at Asn100. Residues 147 to 167 traverse the membrane as a helical segment; sequence VVSSALQVFLALFGFVYACYV.

The protein belongs to the NKAIN family. As to quaternary structure, interacts with atp1b1 C-terminus.

It localises to the cell membrane. In Danio rerio (Zebrafish), this protein is Sodium/potassium-transporting ATPase subunit beta-1-interacting protein 1 (nkain1).